Reading from the N-terminus, the 849-residue chain is Pre-mRNA-processing ATP-dependent RNA helicase PRP5 (849 aa).

Residues 13–81 (ESLLEERRKK…RKRKNEFRKS (69 aa)) adopt a coiled-coil conformation. Residues 28 to 138 (QKKAQFDAQK…PEHDNEKDPL (111 aa)) form a disordered region. Over residues 38-54 (ENQTSRNDIVTNSLEGK) the composition is skewed to polar residues. Basic and acidic residues predominate over residues 55 to 85 (QTTEKFTERQERVKEELRKRKNEFRKSDEPV). Positions 89-102 (PSKKKSKRSKVKKK) are enriched in basic residues. Residues 120–138 (RSKEHIQKVPEHDNEKDPL) show a composition bias toward basic and acidic residues. The Q motif motif lies at 255-284 (TKWSQLGLSTDTMVLITEKLHFGSLTPIQS). A Helicase ATP-binding domain is found at 287–467 (LPAIMSGRDV…VRVLHSPISI (181 aa)). 300–307 (SKTGSGKT) lines the ATP pocket. The DEAD box signature appears at 415–418 (DEAD). The 160-residue stretch at 502-661 (ERSEFFDEVQ…LDPLQAKELQ (160 aa)) folds into the Helicase C-terminal domain. Residues 689–728 (NIKSKREEAQNKDLELKKNDKRSDDLEKKINNPHEGHDSE) are compositionally biased toward basic and acidic residues. The segment at 689–731 (NIKSKREEAQNKDLELKKNDKRSDDLEKKINNPHEGHDSEPES) is disordered.

Belongs to the DEAD box helicase family. DDX46/PRP5 subfamily. Interacts with the U2 snRNP and HSH155.

It localises to the nucleus. It catalyses the reaction ATP + H2O = ADP + phosphate + H(+). Its function is as follows. ATP-dependent RNA helicase involved spliceosome assembly and in nuclear splicing. Catalyzes an ATP-dependent conformational change of U2 snRNP. Bridges U1 and U2 snRNPs and enables stable U2 snRNP association with intron RNA. The chain is Pre-mRNA-processing ATP-dependent RNA helicase PRP5 (PRP5) from Saccharomyces cerevisiae (strain YJM789) (Baker's yeast).